A 471-amino-acid chain; its full sequence is Tryptophanase (471 aa).

3 positions are modified to N6-acetyllysine: Lys-5, Lys-115, and Lys-156. Lys-270 is modified (N6-(pyridoxal phosphate)lysine). An N6-acetyllysine modification is found at Lys-450.

It belongs to the beta-eliminating lyase family. Homotetramer. The cofactor is pyridoxal 5'-phosphate.

The catalysed reaction is L-tryptophan + H2O = indole + pyruvate + NH4(+). It participates in amino-acid degradation; L-tryptophan degradation via pyruvate pathway; indole and pyruvate from L-tryptophan: step 1/1. The polypeptide is Tryptophanase (Escherichia coli O9:H4 (strain HS)).